Here is a 180-residue protein sequence, read N- to C-terminus: ATP-dependent Clp protease proteolytic subunit 2 (180 aa).

The Nucleophile role is filled by Ser-86. His-111 is a catalytic residue.

It belongs to the peptidase S14 family. Fourteen ClpP subunits assemble into 2 heptameric rings which stack back to back to give a disk-like structure with a central cavity, resembling the structure of eukaryotic proteasomes.

The protein resides in the cytoplasm. It carries out the reaction Hydrolysis of proteins to small peptides in the presence of ATP and magnesium. alpha-casein is the usual test substrate. In the absence of ATP, only oligopeptides shorter than five residues are hydrolyzed (such as succinyl-Leu-Tyr-|-NHMec, and Leu-Tyr-Leu-|-Tyr-Trp, in which cleavage of the -Tyr-|-Leu- and -Tyr-|-Trp bonds also occurs).. Its function is as follows. Cleaves peptides in various proteins in a process that requires ATP hydrolysis. Has a chymotrypsin-like activity. Plays a major role in the degradation of misfolded proteins. The sequence is that of ATP-dependent Clp protease proteolytic subunit 2 from Tropheryma whipplei (strain Twist) (Whipple's bacillus).